The sequence spans 192 residues: Ribosomal RNA small subunit methyltransferase G (192 aa).

S-adenosyl-L-methionine-binding positions include Gly59, 111-112 (IE), and Arg124.

This sequence belongs to the methyltransferase superfamily. RNA methyltransferase RsmG family.

It is found in the cytoplasm. Specifically methylates the N7 position of a guanine in 16S rRNA. The protein is Ribosomal RNA small subunit methyltransferase G of Mycoplasma genitalium (strain ATCC 33530 / DSM 19775 / NCTC 10195 / G37) (Mycoplasmoides genitalium).